A 377-amino-acid chain; its full sequence is UPF0754 membrane protein RBAM_010020 (377 aa).

Transmembrane regions (helical) follow at residues Met-1 to Thr-21 and Tyr-357 to Phe-377.

The protein belongs to the UPF0754 family.

It is found in the cell membrane. In Bacillus velezensis (strain DSM 23117 / BGSC 10A6 / LMG 26770 / FZB42) (Bacillus amyloliquefaciens subsp. plantarum), this protein is UPF0754 membrane protein RBAM_010020.